The sequence spans 274 residues: 4-diphosphocytidyl-2-C-methyl-D-erythritol kinase (274 aa).

Lysine 9 is an active-site residue. 91-101 is a binding site for ATP; it reads PAGAGLGGGSS. Aspartate 133 is a catalytic residue.

The protein belongs to the GHMP kinase family. IspE subfamily.

The catalysed reaction is 4-CDP-2-C-methyl-D-erythritol + ATP = 4-CDP-2-C-methyl-D-erythritol 2-phosphate + ADP + H(+). It participates in isoprenoid biosynthesis; isopentenyl diphosphate biosynthesis via DXP pathway; isopentenyl diphosphate from 1-deoxy-D-xylulose 5-phosphate: step 3/6. In terms of biological role, catalyzes the phosphorylation of the position 2 hydroxy group of 4-diphosphocytidyl-2C-methyl-D-erythritol. The protein is 4-diphosphocytidyl-2-C-methyl-D-erythritol kinase of Persephonella marina (strain DSM 14350 / EX-H1).